A 281-amino-acid chain; its full sequence is ATP phosphoribosyltransferase (281 aa).

It belongs to the ATP phosphoribosyltransferase family. Long subfamily. It depends on Mg(2+) as a cofactor.

The protein localises to the cytoplasm. It catalyses the reaction 1-(5-phospho-beta-D-ribosyl)-ATP + diphosphate = 5-phospho-alpha-D-ribose 1-diphosphate + ATP. Its pathway is amino-acid biosynthesis; L-histidine biosynthesis; L-histidine from 5-phospho-alpha-D-ribose 1-diphosphate: step 1/9. Feedback inhibited by histidine. Functionally, catalyzes the condensation of ATP and 5-phosphoribose 1-diphosphate to form N'-(5'-phosphoribosyl)-ATP (PR-ATP). Has a crucial role in the pathway because the rate of histidine biosynthesis seems to be controlled primarily by regulation of HisG enzymatic activity. This Archaeoglobus fulgidus (strain ATCC 49558 / DSM 4304 / JCM 9628 / NBRC 100126 / VC-16) protein is ATP phosphoribosyltransferase (hisG).